The primary structure comprises 382 residues: Ferredoxin--NADP reductase, root isozyme 2, chloroplastic (382 aa).

The N-terminal 64 residues, 1 to 64 (MSHSAVSQAG…DGKRYPSTTI (64 aa)), are a transit peptide targeting the chloroplast. An FAD-binding FR-type domain is found at 97–225 (KESYTAKIVS…TGPSGKVMLL (129 aa)). Residues Cys200 and Cys205 are joined by a disulfide bond. The residue at position 201 (Ser201) is a Phosphoserine. Thr233 is modified (phosphothreonine). 235-253 (IMIATGTGVAPYRGYLRRM) contributes to the NADP(+) binding site.

This sequence belongs to the ferredoxin--NADP reductase type 1 family. Requires FAD as cofactor. In terms of tissue distribution, expressed in shoots and roots. More abundant in roots than RFNR1.

Its subcellular location is the plastid. It localises to the chloroplast. The enzyme catalyses 2 reduced [2Fe-2S]-[ferredoxin] + NADP(+) + H(+) = 2 oxidized [2Fe-2S]-[ferredoxin] + NADPH. Its function is as follows. Maintains the supply of reduced ferredoxin under non-photosynthetic conditions. The protein is Ferredoxin--NADP reductase, root isozyme 2, chloroplastic (RFNR2) of Arabidopsis thaliana (Mouse-ear cress).